The sequence spans 1157 residues: MSEKKVHLRLRKELSVPIAVVENESLAQLSYEEESQASLMDISMEQQQLRLHSHFDNSKVFTENNRYIVKTLQTDYSSGFSNDDELNGYIDMQIGYGLVNDHKKVYIWNIHSTQKDTPYITVPFRSDDNDEIAVAPRCILTFPATMDESPLALNPNDQDETGGLIIIKGSKAIYYEDINSINNLNFKLSEKFSHELELPINSSGGEKCDLMLNCEPAGIVLSTNMGRIFFITIRNSMGKPQLKLGKLLNKPFKLGIWSKIFNTNSSVVSLRNGPILGKGTRLVYITTNKGIFQTWQLSATNSHPTKLIDVNIYEAILESLQDLYPFAHGTLKIWDSHPLQDESSQLFLSSIYDSSCNETYYILSTIIFDSSSNSFTIFSTYRLNTFMESITDTKFKPKIFIPQMENANDTNEVTSILVMFPNAVVITQVNSKLDSSYSMRRKWEDIVSLRNDIDIIGSGYDSKSLYVLTKQMGVLQFFVKENEETNSKPEVGFVKSHVDQAVYFSKINANPIDFNLPPEISLDQESIEHDLKLTSEEIFHSNGKYIPPMLNTLGQHLSVRKEFFQNFLTFVAKNFNYKISPELKLDLIEKFEILNCCIKFNSIIRQSDVLNDIWEKTLSNYNLTQNEHLTTKTVVINSPDVFPVIFKQFLNHVVFVLFPSQNQNFKLNVTNLINLCFYDGILEEGEKTIRYELLELDPMEVDTSKLPWFINFDYLNCINQCFFDFTFACEEEGSLDSYKEGLLKIVKILYYQFNQFKIWINTQPVKSVNANDNFININNLYDDNHLDWNHVLCKVNLKEQCIQIAEFYKDLSGLVQTLQTLDQNDSTTVSLYETFFNEFPKEFSFTLFEYLIKHKKLNDLIFRFPQQHDVLIQFFQESAPKYGHVAWIQQILDGSYADAMNTLKNITVDDSKKGESLSECELHLNVAKLSSLLVEKDNLDINTLRKIQYNLDTIDAEKNISNKLKKGEVQICKRFKNGSIREVFNILVEELKSTTVVNLSDLVELYSMLDDEESLFIPLRLLSVDGNLLNFEVKKFLNALVWRRIVLLNASNEGDKLLQHIVKRVFDEELPKNNDFPLPSVDLLCDKSLLTPEYISETYGRFPIDQNAIREEIYEEISQVETLNSDNSLEIKLHSTIGSVAKEKNYTINYETNTVEY.

Ser-2 is modified (N-acetylserine). The required for normal NPC distribution stretch occupies residues Met-44–Ser-236.

The protein belongs to the nucleoporin Nup133 family. As to quaternary structure, component of the nuclear pore complex (NPC). NPC constitutes the exclusive means of nucleocytoplasmic transport. NPCs allow the passive diffusion of ions and small molecules and the active, nuclear transport receptor-mediated bidirectional transport of macromolecules such as proteins, RNAs, ribonucleoparticles (RNPs), and ribosomal subunits across the nuclear envelope. Due to its 8-fold rotational symmetry, all subunits are present with 8 copies or multiples thereof. NUP133 is part of the heptameric 0.5 MDa autoassembling NUP84 NPC subcomplex (NUP84, NUP85, NUP120, NUP133, NUP145C, SEC13 and SEH1).

It localises to the nucleus. The protein resides in the nuclear pore complex. Its subcellular location is the nucleus membrane. Its function is as follows. Functions as a component of the nuclear pore complex (NPC). NPC components, collectively referred to as nucleoporins (NUPs), can play the role of both NPC structural components and of docking or interaction partners for transiently associated nuclear transport factors. NUP133 is involved in nuclear poly(A)+ RNA, tRNA and pre-ribosome export, in GSP1 nuclear import, in NPC assembly and distribution, as well as in nuclear envelope organization. In Saccharomyces cerevisiae (strain ATCC 204508 / S288c) (Baker's yeast), this protein is Nucleoporin NUP133 (NUP133).